The primary structure comprises 392 residues: F-box/kelch-repeat protein At4g39550 (392 aa).

Residues 1–12 (MSSPEKKRKTTK) show a composition bias toward basic residues. The tract at residues 1-27 (MSSPEKKRKTTKKPSPTPQSTTPNPSL) is disordered. Residues 18 to 27 (PQSTTPNPSL) are compositionally biased toward low complexity. Residues 21–67 (TTPNPSLPDDLVVSCLARVSRLYYPTLSLVSKSFRSLIASPDLYKTR) enclose the F-box domain. 3 Kelch repeats span residues 148–194 (NIYN…VVEG), 195–242 (KIYV…KSAV), and 244–285 (EGEI…VVEN).

In terms of assembly, part of a SCF (ASK-cullin-F-box) protein ligase complex. Interacts with ASK13 and ASK14.

The protein operates within protein modification; protein ubiquitination. Functionally, component of SCF(ASK-cullin-F-box) E3 ubiquitin ligase complexes, which may mediate the ubiquitination and subsequent proteasomal degradation of target proteins. The sequence is that of F-box/kelch-repeat protein At4g39550 from Arabidopsis thaliana (Mouse-ear cress).